Consider the following 338-residue polypeptide: Tetraacyldisaccharide 4'-kinase (338 aa).

Residue 51–58 (HLGGAGKT) coordinates ATP.

This sequence belongs to the LpxK family.

It carries out the reaction a lipid A disaccharide + ATP = a lipid IVA + ADP + H(+). Its pathway is glycolipid biosynthesis; lipid IV(A) biosynthesis; lipid IV(A) from (3R)-3-hydroxytetradecanoyl-[acyl-carrier-protein] and UDP-N-acetyl-alpha-D-glucosamine: step 6/6. In terms of biological role, transfers the gamma-phosphate of ATP to the 4'-position of a tetraacyldisaccharide 1-phosphate intermediate (termed DS-1-P) to form tetraacyldisaccharide 1,4'-bis-phosphate (lipid IVA). This Rhodopseudomonas palustris (strain BisB5) protein is Tetraacyldisaccharide 4'-kinase.